The primary structure comprises 450 residues: UDP-N-acetylmuramoylalanine--D-glutamate ligase (450 aa).

An ATP-binding site is contributed by 116–122; that stretch reads GSNGKTT.

The protein belongs to the MurCDEF family.

Its subcellular location is the cytoplasm. It catalyses the reaction UDP-N-acetyl-alpha-D-muramoyl-L-alanine + D-glutamate + ATP = UDP-N-acetyl-alpha-D-muramoyl-L-alanyl-D-glutamate + ADP + phosphate + H(+). It functions in the pathway cell wall biogenesis; peptidoglycan biosynthesis. Cell wall formation. Catalyzes the addition of glutamate to the nucleotide precursor UDP-N-acetylmuramoyl-L-alanine (UMA). The polypeptide is UDP-N-acetylmuramoylalanine--D-glutamate ligase (Dechloromonas aromatica (strain RCB)).